A 258-amino-acid chain; its full sequence is Snake venom serine protease BPA (258 aa).

The first 18 residues, 1-18 (MVLIRVIANLLILQLSNA), serve as a signal peptide directing secretion. The propeptide occupies 19–24 (QKSSEL). Positions 25–249 (VIGGDECNIT…YLPWIQSIIA (225 aa)) constitute a Peptidase S1 domain. 6 cysteine pairs are disulfide-bonded: Cys-31–Cys-163, Cys-50–Cys-66, Cys-98–Cys-256, Cys-142–Cys-210, Cys-174–Cys-189, and Cys-200–Cys-225. Asn-32 and Asn-44 each carry an N-linked (GlcNAc...) asparagine glycan. The Charge relay system role is filled by His-65. Residue Asn-103 is glycosylated (N-linked (GlcNAc...) asparagine). Asp-110 functions as the Charge relay system in the catalytic mechanism. N-linked (GlcNAc...) asparagine glycosylation occurs at Asn-121. An O-linked (GalNAc...) serine glycan is attached at Ser-133. N-linked (GlcNAc...) asparagine glycosylation is found at Asn-154 and Asn-170. The active-site Charge relay system is the Ser-204. N-linked (GlcNAc...) asparagine glycans are attached at residues Asn-211 and Asn-251. The O-linked (GalNAc...) threonine glycan is linked to Thr-255.

The protein belongs to the peptidase S1 family. Snake venom subfamily. As to quaternary structure, monomer. In terms of processing, N- and O-glycosylated. The glycosylation has a stabilizing effect on the protein. However, the removal of part of the carbohydrates enhances the proteolytic activity of the SVSP towards human and rat fibrinogen. Expressed by the venom gland.

It localises to the secreted. Inhibited by diisopropylfluorophosphate (DFP), but not by SBTI, Antithrombin III/heparin and BPTI, probably due to steric hindrance caused by its huge carbohydrate moietie. Functionally, snake venom serine protease that has a potent and selective fibrinogenolytic activity. Preferentially cleaves the alpha-chain (FGA) of human and rat fibrinogen at Arg-|-Gly bonds, and slowly digests the beta-chain (FGB). In vivo, completely avoids thrombus formation induced in rat, decreases the fibrinogen plasma level and prolonges the recalcification time. Possesses esterolytic and amidolytic activities. This chain is Snake venom serine protease BPA, found in Bothrops jararaca (Jararaca).